Reading from the N-terminus, the 422-residue chain is Tyrosine-protein kinase STYK1 (422 aa).

The helical transmembrane segment at 26-46 threads the bilayer; it reads VIIVPTLLVTIFLILLGVILW. In terms of domain architecture, Protein kinase spans 114–384; sequence SEVLEQICSG…ELRLRLEAAI (271 aa). Residues 120–128 and K147 contribute to the ATP site; that span reads ICSGSCGPI. D251 serves as the catalytic Proton acceptor.

The protein belongs to the protein kinase superfamily. Tyr protein kinase family. As to expression, widely expressed. Highly expressed in brain, placenta and prostate. Expressed in tumor cells such as hepatoma cells L-02, cervix carcinoma cells HeLa, ovary cancer cells Ho8910 and chronic myelogenous leukemia cells K-562, but not in other tumor cells such as epidermoid carcinoma (A-431). Undetectable in most normal lung tissues, widely expressed in lung cancers.

Its subcellular location is the membrane. The catalysed reaction is L-tyrosyl-[protein] + ATP = O-phospho-L-tyrosyl-[protein] + ADP + H(+). Probable tyrosine protein-kinase, which has strong transforming capabilities on a variety of cell lines. When overexpressed, it can also induce tumor cell invasion as well as metastasis in distant organs. May act by activating both MAP kinase and phosphatidylinositol 3'-kinases (PI3K) pathways. This chain is Tyrosine-protein kinase STYK1 (STYK1), found in Homo sapiens (Human).